The primary structure comprises 505 residues: Peroxisome proliferator-activated receptor gamma (505 aa).

An O-linked (GlcNAc) threonine glycan is attached at threonine 84. Serine 112 is modified (phosphoserine; by MAPK). The nuclear receptor DNA-binding region spans 136–210; the sequence is AIECRVCGDK…VGMSHNAIRF (75 aa). 2 NR C4-type zinc fingers span residues 139-159 and 176-198; these read CRVC…CEGC and CDLN…FQKC. The interaction with FAM120B stretch occupies residues 205–280; it reads HNAIRFGRMP…DKSPFVIYDM (76 aa). The 266-residue stretch at 238–503 folds into the NR LBD domain; it reads DLRALAKHLY…HPLLQEIYKD (266 aa). A Glycyl lysine isopeptide (Lys-Gly) (interchain with G-Cter in ubiquitin) cross-link involves residue lysine 252. A 9aaTAD motif is present at residues 495–503; that stretch reads PLLQEIYKD.

It belongs to the nuclear hormone receptor family. NR1 subfamily. As to quaternary structure, interacts with FOXO1 (acetylated form). Heterodimer with other nuclear receptors, such as RXRA. The heterodimer with the retinoic acid receptor RXRA is called adipocyte-specific transcription factor ARF6. Interacts with NCOA6 coactivator, leading to a strong increase in transcription of target genes. Interacts with coactivator PPARBP, leading to a mild increase in transcription of target genes. Interacts with NOCA7 in a ligand-inducible manner. Interacts with NCOA1 and NCOA2 LXXLL motifs. Interacts with ASXL1, ASXL2, DNTTIP2, FAM120B, MAP2K1/MEK1, NR0B2, PDPK1, PRDM16, PRMT2 and TGFB1I1. Interacts (when activated by agonist) with PPP5C. Interacts with HELZ2 and THRAP3; the interaction stimulates the transcriptional activity of PPARG. Interacts with PER2, the interaction is ligand dependent and blocks PPARG recruitment to target promoters. Interacts with NOCT. Interacts with ACTN4. Interacts (when in the liganded conformation) with GPS2. Interacts with CRY1 and CRY2 in a ligand-dependent manner. In the absence of hormonal ligand, interacts with TACC1. In macrophages, interacts with PAQR3 and STUB1; the interactions promote PPARG poylubiquitination and STUB1-mediated degradation. In terms of processing, phosphorylated by MAPK. The phosphorylation inhibits PPAR gamma activity. Post-translationally, O-GlcNAcylation at Thr-84 reduces transcriptional activity in adipocytes. Phosphorylated at basal conditions and dephosphorylated when treated with the ligand. May be dephosphorylated by PPP5C. The phosphorylated form may be inactive and dephosphorylation at induces adipogenic activity. In terms of processing, ubiquitinated by E3 ubiquitin-protein ligase complex containing FBXO9; leading to proteasomal degradation. Ubiquitinated at Lys-252 by TRIM55 leading to proteasomal degradation. Ubiquitinated by E3 ubiquitin-protein ligase STUB1/CHIP; leading to proteasomal degradation. In terms of tissue distribution, highest expression in adipose tissue.

The protein resides in the nucleus. Its subcellular location is the cytoplasm. PDPK1 activates its transcriptional activity independently of its kinase activity. Nuclear receptor that binds peroxisome proliferators such as hypolipidemic drugs and fatty acids. Once activated by a ligand, the nuclear receptor binds to DNA specific PPAR response elements (PPRE) and modulates the transcription of its target genes, such as acyl-CoA oxidase. It therefore controls the peroxisomal beta-oxidation pathway of fatty acids. Key regulator of adipocyte differentiation and glucose homeostasis. ARF6 acts as a key regulator of the tissue-specific adipocyte P2 (aP2) enhancer. Acts as a critical regulator of gut homeostasis by suppressing NF-kappa-B-mediated pro-inflammatory responses. Plays a role in the regulation of cardiovascular circadian rhythms by regulating the transcription of BMAL1 in the blood vessels. The polypeptide is Peroxisome proliferator-activated receptor gamma (Pparg) (Rattus norvegicus (Rat)).